The primary structure comprises 887 residues: Translation initiation factor IF-2 (887 aa).

Positions 1–291 (MTDQADTSER…RRRVERERKK (291 aa)) are disordered. The span at 58 to 117 (AAPAAAPAAAPAAAEEVAKKPVAAPEVKPAAPVEERPAPVAKAAPEVKAVPAPAPAAAPA) shows a compositional bias: low complexity. Composition is skewed to basic and acidic residues over residues 148 to 178 (SARE…EAER), 185 to 194 (AAEEASRHTA), 201 to 215 (RAAE…DDRP), and 267 to 276 (AFDDESERQR). The tr-type G domain maps to 385-553 (ARAPVVTVMG…TILLQAELLD (169 aa)). The tract at residues 394 to 401 (GHVDHGKT) is G1. Residue 394 to 401 (GHVDHGKT) participates in GTP binding. The tract at residues 419–423 (GITQH) is G2. Residues 441–444 (DTPG) are G3. Residues 441-445 (DTPGH) and 495-498 (NKMD) each bind GTP. A G4 region spans residues 495–498 (NKMD). Residues 531–533 (SAK) are G5.

This sequence belongs to the TRAFAC class translation factor GTPase superfamily. Classic translation factor GTPase family. IF-2 subfamily.

The protein resides in the cytoplasm. One of the essential components for the initiation of protein synthesis. Protects formylmethionyl-tRNA from spontaneous hydrolysis and promotes its binding to the 30S ribosomal subunits. Also involved in the hydrolysis of GTP during the formation of the 70S ribosomal complex. This chain is Translation initiation factor IF-2, found in Parvibaculum lavamentivorans (strain DS-1 / DSM 13023 / NCIMB 13966).